Here is a 301-residue protein sequence, read N- to C-terminus: Golgi to ER traffic protein 2 (301 aa).

Topologically, residues 1–167 (MSEPVVDTAE…LEYNTYNQKL (167 aa)) are cytoplasmic. Low complexity predominate over residues 42 to 55 (SQGSSVKTSGVKSV). The disordered stretch occupies residues 42–93 (SQGSSVKTSGVKSVLDQEKEATSSHDDDPEIQDITEITTPPPRTPPIGEDAP). Over residues 56–67 (LDQEKEATSSHD) the composition is skewed to basic and acidic residues. The chain crosses the membrane as a helical span at residues 168 to 188 (WKFRFLLVRVLVTLFNFFYHY). The Lumenal segment spans residues 189–214 (TSISDFHASNYAYVRDLSSEEYPVRD). Residues 215-234 (FFTWFATSEVVLVAAYYSVF) traverse the membrane as a helical segment. Residues 235-278 (HSLGLFHAANQNSIILKVMSMGSMILPQLESYKPLVARFLGYYE) are Cytoplasmic-facing. The helical transmembrane segment at 279–299 (LLGIVLGGLSLVIVLFGLLSF) threads the bilayer. Topologically, residues 300–301 (AN) are lumenal.

This sequence belongs to the GET2 family. As to quaternary structure, component of the Golgi to ER traffic (GET) complex, which is composed of GET1, GET2 and GET3. Within the complex, GET1 and GET2 form a heterotetramer which is stabilized by phosphatidylinositol binding and which binds to the GET3 homodimer.

It is found in the endoplasmic reticulum membrane. The protein localises to the golgi apparatus membrane. Its function is as follows. Required for the post-translational delivery of tail-anchored (TA) proteins to the endoplasmic reticulum. Together with GET1, acts as a membrane receptor for soluble GET3, which recognizes and selectively binds the transmembrane domain of TA proteins in the cytosol. The GET complex cooperates with the HDEL receptor ERD2 to mediate the ATP-dependent retrieval of resident ER proteins that contain a C-terminal H-D-E-L retention signal from the Golgi to the ER. This Candida dubliniensis (strain CD36 / ATCC MYA-646 / CBS 7987 / NCPF 3949 / NRRL Y-17841) (Yeast) protein is Golgi to ER traffic protein 2.